Reading from the N-terminus, the 224-residue chain is Heme response regulator HssR (224 aa).

The region spanning 3–116 (NCLIVDDDKK…ELLFRIKAVL (114 aa)) is the Response regulatory domain. At aspartate 52 the chain carries 4-aspartylphosphate. Positions 124–222 (DNELQLGNLI…VRGQGYRVDQ (99 aa)) form a DNA-binding region, ompR/PhoB-type.

Phosphorylated by HssS.

Its subcellular location is the cytoplasm. In terms of biological role, member of the two-component regulatory system HssS/HssR involved in intracellular heme homeostasis and tempering of staphylococcal virulence. Phosphorylated HssR binds to a direct repeat sequence within hrtAB promoter and activates the expression of hrtAB, an efflux pump, in response to extracellular heme, hemin, hemoglobin or blood. This Staphylococcus epidermidis (strain ATCC 12228 / FDA PCI 1200) protein is Heme response regulator HssR (hssR).